We begin with the raw amino-acid sequence, 447 residues long: Enolase (447 aa).

Residue Gln-168 coordinates (2R)-2-phosphoglycerate. The active-site Proton donor is the Glu-210. Positions 247, 292, and 319 each coordinate Mg(2+). 4 residues coordinate (2R)-2-phosphoglycerate: Lys-344, Arg-373, Ser-374, and Lys-395. The active-site Proton acceptor is the Lys-344.

The protein belongs to the enolase family. In terms of assembly, component of the RNA degradosome, a multiprotein complex involved in RNA processing and mRNA degradation. Mg(2+) is required as a cofactor.

It is found in the cytoplasm. The protein localises to the secreted. Its subcellular location is the cell surface. The enzyme catalyses (2R)-2-phosphoglycerate = phosphoenolpyruvate + H2O. Its pathway is carbohydrate degradation; glycolysis; pyruvate from D-glyceraldehyde 3-phosphate: step 4/5. Functionally, catalyzes the reversible conversion of 2-phosphoglycerate (2-PG) into phosphoenolpyruvate (PEP). It is essential for the degradation of carbohydrates via glycolysis. This is Enolase from Blochmanniella floridana.